The primary structure comprises 377 residues: MTNATGPQMAYYGAASMDFGYPEGVSIVDFVRPEIKPYVHQHWYNYPPVNPMWHYLLGVIYLFLGTVSIFGNGLVIYLFNKSAALRTPANILVVNLALSDLIMLTTNVPFFTYNCFSGGVWMFSPQYCEIYACLGAITGVCSIWLLCMISFDRYNIICNGFNGPKLTTGKAVVFALISWVIAIGCALPPFFGWGNYILEGILDSCSYDYLTQDFNTFSYNIFIFVFDYFLPAAIIVFSYVFIVKAIFAHEAAMRAQAKKMNVSTLRSNEADAQRAEIRIAKTALVNVSLWFICWTPYALISLKGVMGDTSGITPLVSTLPALLAKSCSCYNPFVYAISHPKYRLAITQHLPWFCVHETETKSNDDSQSNSTVAQDKA.

The Extracellular segment spans residues 1 to 53; it reads MTNATGPQMAYYGAASMDFGYPEGVSIVDFVRPEIKPYVHQHWYNYPPVNPMW. N-linked (GlcNAc...) asparagine glycosylation is present at N3. The chain crosses the membrane as a helical span at residues 54 to 78; that stretch reads HYLLGVIYLFLGTVSIFGNGLVIYL. Over 79–90 the chain is Cytoplasmic; that stretch reads FNKSAALRTPAN. Residues 91 to 115 form a helical membrane-spanning segment; the sequence is ILVVNLALSDLIMLTTNVPFFTYNC. At 116–131 the chain is on the extracellular side; that stretch reads FSGGVWMFSPQYCEIY. The cysteines at positions 128 and 205 are disulfide-linked. Residues 132-151 form a helical membrane-spanning segment; the sequence is ACLGAITGVCSIWLLCMISF. Residues 152-170 lie on the Cytoplasmic side of the membrane; that stretch reads DRYNIICNGFNGPKLTTGK. A helical membrane pass occupies residues 171–194; the sequence is AVVFALISWVIAIGCALPPFFGWG. At 195 to 218 the chain is on the extracellular side; that stretch reads NYILEGILDSCSYDYLTQDFNTFS. The chain crosses the membrane as a helical span at residues 219–246; that stretch reads YNIFIFVFDYFLPAAIIVFSYVFIVKAI. At 247 to 281 the chain is on the cytoplasmic side; that stretch reads FAHEAAMRAQAKKMNVSTLRSNEADAQRAEIRIAK. A helical transmembrane segment spans residues 282-305; that stretch reads TALVNVSLWFICWTPYALISLKGV. Over 306–313 the chain is Extracellular; that stretch reads MGDTSGIT. The helical transmembrane segment at 314 to 338 threads the bilayer; sequence PLVSTLPALLAKSCSCYNPFVYAIS. K325 is subject to N6-(retinylidene)lysine. The Cytoplasmic segment spans residues 339–377; it reads HPKYRLAITQHLPWFCVHETETKSNDDSQSNSTVAQDKA.

This sequence belongs to the G-protein coupled receptor 1 family. Opsin subfamily. Post-translationally, phosphorylated on some or all of the serine and threonine residues present in the C-terminal region. In terms of tissue distribution, expressed in all of the seven retinular cells (R1-R7) forming the main rhabdom in each ommatidium.

It is found in the membrane. Visual pigments are the light-absorbing molecules that mediate vision. They consist of an apoprotein, opsin, covalently linked to cis-retinal. This opsin produces visual pigments with maximal absorption in the blue-green region of the spectrum. The chain is Compound eye opsin BCRH2 from Hemigrapsus sanguineus (Asian shore crab).